A 199-amino-acid chain; its full sequence is N-(5'-phosphoribosyl)anthranilate isomerase (199 aa).

This sequence belongs to the TrpF family.

It carries out the reaction N-(5-phospho-beta-D-ribosyl)anthranilate = 1-(2-carboxyphenylamino)-1-deoxy-D-ribulose 5-phosphate. It functions in the pathway amino-acid biosynthesis; L-tryptophan biosynthesis; L-tryptophan from chorismate: step 3/5. The sequence is that of N-(5'-phosphoribosyl)anthranilate isomerase from Streptococcus pneumoniae serotype 19F (strain G54).